The primary structure comprises 197 residues: Amino-terminal enhancer of split (197 aa).

Residues 1–15 show a composition bias toward low complexity; that stretch reads MMFPQSSSRHSGSSH. 2 disordered regions span residues 1–20 and 169–197; these read MMFP…PQQL and LGSQ…DKSD. The CCN domain stretch occupies residues 166–197; that stretch reads LSALGSQGHLPKEDKNGHEGDRRPDDDGDKSD. Residues 175 to 197 are compositionally biased toward basic and acidic residues; that stretch reads LPKEDKNGHEGDRRPDDDGDKSD.

This sequence belongs to the WD repeat Groucho/TLE family. In terms of assembly, monomer. Post-translationally, ubiquitinated by XIAP/BIRC4. Predominantly expressed in brain, testis and ovary. Ubiquitously expressed in the developing embryo. Present in unfertilized and fertilized eggs.

It localises to the nucleus. Its function is as follows. May act as a transcriptional corepressor. Has a possible role in the negative regulation of proteins containing WD-40 repeats. May be required for the initiation and maintenance of the differentiated state. This Xenopus laevis (African clawed frog) protein is Amino-terminal enhancer of split (aes).